Here is a 348-residue protein sequence, read N- to C-terminus: Noscapine synthase SDR1 (348 aa).

The protein belongs to the NAD(P)-dependent epimerase/dehydratase family.

The enzyme catalyses narcotine hemiacetal + NAD(+) = noscapine + NADH + H(+). It participates in alkaloid biosynthesis. In terms of biological role, oxidoreductase that catalyzes the last step in the biosynthesis of the benzylisoquinoline alkaloid noscapine. Converts narcotine hemiacetal to noscapine. The chain is Noscapine synthase SDR1 from Papaver somniferum (Opium poppy).